The following is a 339-amino-acid chain: Lipoate-protein ligase A (339 aa).

In terms of domain architecture, BPL/LPL catalytic spans 29–217 (PKKQSILFLW…AFFQHYGMKV (189 aa)). ATP contacts are provided by residues Arg71, 76–79 (GAVF), and Lys135. A (R)-lipoate-binding site is contributed by Lys135.

Belongs to the LplA family. Monomer.

The protein localises to the cytoplasm. It catalyses the reaction L-lysyl-[lipoyl-carrier protein] + (R)-lipoate + ATP = N(6)-[(R)-lipoyl]-L-lysyl-[lipoyl-carrier protein] + AMP + diphosphate + H(+). It participates in protein modification; protein lipoylation via exogenous pathway; protein N(6)-(lipoyl)lysine from lipoate: step 1/2. Its pathway is protein modification; protein lipoylation via exogenous pathway; protein N(6)-(lipoyl)lysine from lipoate: step 2/2. Functionally, catalyzes both the ATP-dependent activation of exogenously supplied lipoate to lipoyl-AMP and the transfer of the activated lipoyl onto the lipoyl domains of lipoate-dependent enzymes. In Blochmanniella pennsylvanica (strain BPEN), this protein is Lipoate-protein ligase A.